Here is a 772-residue protein sequence, read N- to C-terminus: 5-methyltetrahydropteroyltriglutamate--homocysteine methyltransferase (772 aa).

5-methyltetrahydropteroyltri-L-glutamate-binding positions include 24–27 (RELK) and K120. L-homocysteine-binding positions include 446-448 (IGS) and E499. Residues 446-448 (IGS) and E499 each bind L-methionine. Residue W576 coordinates 5-methyltetrahydropteroyltri-L-glutamate. D614 is a binding site for L-homocysteine. L-methionine is bound at residue D614. 5-methyltetrahydropteroyltri-L-glutamate is bound at residue E620. Zn(2+) is bound by residues H656, C658, and E680. The active-site Proton donor is the H709. C741 is a Zn(2+) binding site.

Belongs to the vitamin-B12 independent methionine synthase family. The cofactor is Zn(2+).

The enzyme catalyses 5-methyltetrahydropteroyltri-L-glutamate + L-homocysteine = tetrahydropteroyltri-L-glutamate + L-methionine. It participates in amino-acid biosynthesis; L-methionine biosynthesis via de novo pathway; L-methionine from L-homocysteine (MetE route): step 1/1. Its function is as follows. Catalyzes the transfer of a methyl group from 5-methyltetrahydrofolate to homocysteine resulting in methionine formation. This Streptomyces coelicolor (strain ATCC BAA-471 / A3(2) / M145) protein is 5-methyltetrahydropteroyltriglutamate--homocysteine methyltransferase.